The following is a 318-amino-acid chain: Esterase FVEG_12639 (318 aa).

Active-site residues include serine 156, aspartate 255, and histidine 285.

It belongs to the AB hydrolase 3 family.

In terms of biological role, esterase; part of the Fusarium detoxification of benzoxazolinone cluster 2 (FDB2) involved in the degradation of benzoxazolinones produced by the host plant. Maize, wheat, and rye produce the 2 benzoxazinone phytoanticipins 2,4-dihy-droxy-7-methoxy-1,4-benzoxazin-3-one (DIMBOA) and 2,4-dihydroxy-1,4-benzoxazin-3-one (DIBOA) that, due to their inherent instability once released, spontaneously degrade to the more stable corresponding benzoxazolinones, 6-methoxy-2-benzoxazolinone (MBOA) and 2-benzoxazolinone (BOA), respectively. The first step in the detoxification of benzoxazolinones involves the hydrolysis of the cyclic ester bond of benzoxazolinones by the FDB1 cluster gamma-lactamase MBL1 to aminophenols. MBL1 is able to convert BOA into 2-aminophenol (2-AP), as well as MBOA into 5-methoxy-2-aminophenol (2-AMP). The FDB2 cluster N-malonyltransferase FDB2/NAT1 then metabolizes aminophenols via N-malonylation to non-toxic malonamic acids. FDB2/NAT1 converts 2-AP into N-(2-hydroxyphenyl) malonamic acid (HPMA) and 2-AMP into N-(2-hydroxy-4-methoxyphenyl) malonamic acid (HMPMA). The duplicated dienlactone hydrolases DLH1 and DLH2 may provide redundant function for hydrolyzing the lactone moiety in the BOA molecule. The roles of the amidases an other enzymes encoded by the 2 FDB clusters have not been identified so far. The chain is Esterase FVEG_12639 from Gibberella moniliformis (strain M3125 / FGSC 7600) (Maize ear and stalk rot fungus).